The following is a 1254-amino-acid chain: Structural polyprotein (1254 aa).

The tract at residues 1–33 (MFPFQPMYPMQPMPYRNPFAAPRRPWFPRTDPF) is necessary for nucleocapsid assembly and virus assembly. Positions 33 to 68 (FLAMQVQELTRSMANLTFKQRRDAPPEGPSAKKPKK) are host transcription inhibition. Positions 41–48 (LTRSMANL) match the Supraphysiological nuclear export signal motif. The segment at 45 to 119 (MANLTFKQRR…KKPGKRQRMV (75 aa)) is disordered. A Nuclear localization signal motif is present at residues 64 to 68 (KKPKK). Positions 80–92 (GKKKKNQGKKKAK) are enriched in basic residues. The interval 91–127 (AKTGPPNPKAQNGNKKKTNKKPGKRQRMVMKLESDKT) is binding to the viral RNA. Residues threonine 93 and threonine 108 each carry the phosphothreonine modification. Over residues 104–118 (NKKKTNKKPGKRQRM) the composition is skewed to basic residues. Positions 112-126 (PGKRQRMVMKLESDK) are ribosome-binding. Serine 124 carries the phosphoserine modification. In terms of domain architecture, Peptidase S3 spans 126-275 (KTFPIMLEGK…KYTPENCEQW (150 aa)). Threonine 127 bears the Phosphothreonine mark. Residues histidine 152, aspartate 174, and serine 226 each act as charge relay system in the active site. Residues 276–287 (SLVTTMCLLANV) form a functions as an uncleaved signal peptide for the precursor of protein E3/E2 region. At 276 to 701 (SLVTTMCLLA…HYYHRYPMST (426 aa)) the chain is on the extracellular side. N-linked (GlcNAc...) asparagine; by host glycosylation is found at asparagine 286, asparagine 546, and asparagine 652. Residues 702-722 (ILGLSICAAIATVSVAASTWL) form a helical membrane-spanning segment. Residues 723–757 (FCRSRVACLTPYRLTPNARIPFCLAVLCCARTARA) lie on the Cytoplasmic side of the membrane. S-palmitoyl cysteine; by host attachment occurs at residues cysteine 730, cysteine 750, and cysteine 751. The segment at 730-750 (CLTPYRLTPNARIPFCLAVLC) is transient transmembrane before p62-6K protein processing. Topologically, residues 758-772 (ETTWESLDHLWNNNQ) are extracellular. A helical transmembrane segment spans residues 773–793 (QMFWIQLLIPLAALIVVTRLL). The Cytoplasmic segment spans residues 794-795 (RC). The helical transmembrane segment at 796–816 (VCCVVPFLVMAGAAAGAYEHA) threads the bilayer. Over 817–1224 (TTMPSQAGIS…SKTAWTWLTS (408 aa)) the chain is Extracellular. Disulfide bonds link cysteine 861/cysteine 926, cysteine 874/cysteine 906, cysteine 875/cysteine 908, and cysteine 880/cysteine 890. The interval 896–913 (VYPFMWGGAYCFCDTENT) is E1 fusion peptide loop. N-linked (GlcNAc...) asparagine; by host glycosylation occurs at asparagine 946. 4 disulfides stabilise this stretch: cysteine 1071/cysteine 1083, cysteine 1113/cysteine 1188, cysteine 1118/cysteine 1192, and cysteine 1140/cysteine 1182. A helical transmembrane segment spans residues 1225–1245 (LLGGSAVIIIIGLVLATIVAM). The Cytoplasmic portion of the chain corresponds to 1246–1254 (YVLTNQKHN).

As to quaternary structure, homodimer. Homomultimer. Interacts with host karyopherin KPNA4; this interaction allows the nuclear import of the viral capsid protein. Interacts with spike glycoprotein E2. Interacts with host IRAK1; the interaction leads to inhibition of IRAK1-dependent signaling. Part of a tetrameric complex composed of host CRM1, host importin alpha/beta dimer and the viral capsid; this complex blocks the receptor-mediated transport through the nuclear pore. Interacts with host phosphatase PPP1CA; this interaction dephosphorylates the capsid protein, which increases its ability to bind to the viral genome. The precursor of protein E3/E2 and E1 form a heterodimer shortly after synthesis. In terms of assembly, interacts with spike glycoprotein E2. The precursor of protein E3/E2 and E1 form a heterodimer shortly after synthesis. Processing of the precursor of protein E3/E2 into E2 and E3 results in a heterodimer of the spike glycoproteins E2 and E1. Spike at virion surface are constituted of three E2-E1 heterodimers. After target cell attachment and endocytosis, E1 change conformation to form homotrimers. Interacts with 6K protein. Interacts with host LDLRAD3; this interaction mediates viral entry to the host cell. As to quaternary structure, interacts with spike glycoprotein E1. Processing of the precursor of protein E3/E2 into E2 and E3 results in a heterodimer of the spike glycoproteins E2 and E1. Spike at virion surface are constituted of a trimer of E2-E1 heterodimers. Interacts with 6K protein. Interacts with host LDLRAD3; this interaction mediates viral entry to the host cell. Oligomer. Interacts with spike glycoprotein E1. Interacts with spike glycoprotein E2. Post-translationally, structural polyprotein: Specific enzymatic cleavages in vivo yield mature proteins. Capsid protein is auto-cleaved during polyprotein translation, unmasking a signal peptide at the N-terminus of the precursor of E3/E2. The remaining polyprotein is then targeted to the host endoplasmic reticulum, where host signal peptidase cleaves it into pE2, 6K and E1 proteins. pE2 is further processed to mature E3 and E2 by host furin in trans-Golgi vesicle. In terms of processing, palmitoylated via thioester bonds. These palmitoylations may induce disruption of the C-terminus transmembrane. This would result in the reorientation of E2 C-terminus from lumenal to cytoplasmic side. Phosphorylated on serine and threonine residues. Post-translationally, N-glycosylated. In terms of processing, palmitoylated via thioester bonds.

The protein resides in the virion. It is found in the host cytoplasm. Its subcellular location is the host cell membrane. The protein localises to the host nucleus. It localises to the virion membrane. The enzyme catalyses Autocatalytic release of the core protein from the N-terminus of the togavirus structural polyprotein by hydrolysis of a -Trp-|-Ser- bond.. In terms of biological role, forms an icosahedral capsid with a T=4 symmetry composed of 240 copies of the capsid protein surrounded by a lipid membrane through which penetrate 80 spikes composed of trimers of E1-E2 heterodimers. The capsid protein binds to the viral RNA genome at a site adjacent to a ribosome binding site for viral genome translation following genome release. Possesses a protease activity that results in its autocatalytic cleavage from the nascent structural protein. Following its self-cleavage, the capsid protein transiently associates with ribosomes, and within several minutes the protein binds to viral RNA and rapidly assembles into icosahedric core particles. The resulting nucleocapsid eventually associates with the cytoplasmic domain of the spike glycoprotein E2 at the cell membrane, leading to budding and formation of mature virions. In case of infection, new virions attach to target cells and after clathrin-mediated endocytosis their membrane fuses with the host endosomal membrane. This leads to the release of the nucleocapsid into the cytoplasm, followed by an uncoating event necessary for the genomic RNA to become accessible. The uncoating might be triggered by the interaction of capsid proteins with ribosomes. Binding of ribosomes would release the genomic RNA since the same region is genomic RNA-binding and ribosome-binding. Specifically inhibits interleukin-1 receptor-associated kinase 1/IRAK1-dependent signaling during viral entry, representing a means by which the alphaviruses may evade innate immune detection and activation prior to viral gene expression. Inhibits host transcription. Forms a tetrameric complex with XPO1/CRM1 and the nuclear import receptor importin. This complex blocks the central channel of host nuclear pores thereby inhibiting the receptor-mediated nuclear transport and thus the host mRNA and rRNA transcription. The inhibition of transcription is linked to a cytopathic effect on the host cell. Functionally, provides the signal sequence for the translocation of the precursor of protein E3/E2 to the host endoplasmic reticulum. Furin-cleaved E3 remains associated with spike glycoprotein E1 and mediates pH protection of the latter during the transport via the secretory pathway. After virion release from the host cell, the assembly protein E3 is gradually released in the extracellular space. Plays a role in viral attachment to target host cell, by binding to the cell receptor LDLRAD3. Synthesized as a p62 precursor which is processed by furin at the cell membrane just before virion budding, giving rise to E2-E1 heterodimer. The p62-E1 heterodimer is stable, whereas E2-E1 is unstable and dissociate at low pH. p62 is processed at the last step, presumably to avoid E1 fusion activation before its final export to cell surface. E2 C-terminus contains a transitory transmembrane that would be disrupted by palmitoylation, resulting in reorientation of the C-terminal tail from lumenal to cytoplasmic side. This step is critical since E2 C-terminus is involved in budding by interacting with capsid proteins. This release of E2 C-terminus in cytoplasm occurs lately in protein export, and precludes premature assembly of particles at the endoplasmic reticulum membrane. Its function is as follows. Acts as a viroporin that participates in virus glycoprotein processing and transport to the plasma membrane, cell permeabilization and budding of viral particles. Disrupts the calcium homeostasis of the cell, probably at the endoplasmic reticulum level. This leads to cytoplasmic calcium elevation. Because of its lipophilic properties, the 6K protein is postulated to influence the selection of lipids that interact with the transmembrane domains of the glycoproteins, which, in turn, affects the deformability of the bilayer required for the extreme curvature that occurs as budding proceeds. Present in low amount in virions, about 3% compared to viral glycoproteins. In terms of biological role, class II viral fusion protein. Fusion activity is inactive as long as E1 is bound to E2 in mature virion. After virus attachment to cell receptor LDLRAD3 and endocytosis, acidification of the endosome would induce dissociation of E1/E2 heterodimer and concomitant trimerization of the E1 subunits. This E1 trimer is fusion active, and promotes release of viral nucleocapsid in cytoplasm after endosome and viral membrane fusion. Efficient fusion requires the presence of cholesterol and sphingolipid in the target membrane. Fusion is optimal at levels of about 1 molecule of cholesterol per 2 molecules of phospholipids, and is specific for sterols containing a 3-beta-hydroxyl group. This is Structural polyprotein from Bos taurus (Bovine).